A 785-amino-acid chain; its full sequence is B-cell scaffold protein with ankyrin repeats (785 aa).

Residues 1 to 154 (MLPAAPGKGL…DYISVIQSII (154 aa)) are interaction with ITPR2. Residues 25 to 153 (NTKDIIMIYE…EDYISVIQSI (129 aa)) enclose the TIR domain. The 128-residue stretch at 200–327 (VLPTEIPCEN…EIPYYEFQSL (128 aa)) folds into the DBB domain. 2 ANK repeats span residues 342-371 (ELPT…ATWA) and 378-408 (EGSD…EIDI). Disordered regions lie at residues 433 to 480 (PAFH…SESS), 493 to 514 (GADP…LPPP), 538 to 578 (QMER…EDPY), and 606 to 625 (FIIN…PPKE). Residues 553–568 (ETGDEPKGEKEKKEEE) show a composition bias toward basic and acidic residues. A compositionally biased stretch (acidic residues) spans 569–578 (KEQEEEEDPY). Residues 611-621 (PPAPTPRPTSI) are compositionally biased toward pro residues.

In terms of assembly, interacts with LYN, ITPR1 and ITPR2. Post-translationally, phosphorylated on tyrosines upon BCR activation. In terms of tissue distribution, expressed in B-cell but not T-cell or myeloid cell lines. Highest expression in CD19(+) B-cells, with very low expression in other cell populations.

Functionally, involved in B-cell receptor (BCR)-induced Ca(2+) mobilization from intracellular stores. Promotes Lyn-mediated phosphorylation of IP3 receptors 1 and 2. This Homo sapiens (Human) protein is B-cell scaffold protein with ankyrin repeats (BANK1).